Consider the following 227-residue polypeptide: Cytidylate kinase (227 aa).

12 to 20 contacts ATP; it reads GPSGAGKGT.

This sequence belongs to the cytidylate kinase family. Type 1 subfamily.

The protein resides in the cytoplasm. It carries out the reaction CMP + ATP = CDP + ADP. The catalysed reaction is dCMP + ATP = dCDP + ADP. The chain is Cytidylate kinase from Escherichia fergusonii (strain ATCC 35469 / DSM 13698 / CCUG 18766 / IAM 14443 / JCM 21226 / LMG 7866 / NBRC 102419 / NCTC 12128 / CDC 0568-73).